Consider the following 220-residue polypeptide: Large ribosomal subunit protein uL10c (220 aa).

The transit peptide at 1–41 (MEVALLSFSSSLSPLCHQRISTLTPKTSNSPNYPRLPVIRS) directs the protein to the chloroplast.

It belongs to the universal ribosomal protein uL10 family. Part of the 50S ribosomal subunit.

Its subcellular location is the plastid. It is found in the chloroplast. Its function is as follows. This protein binds directly to 23S ribosomal RNA. In Arabidopsis thaliana (Mouse-ear cress), this protein is Large ribosomal subunit protein uL10c (RPL10).